The sequence spans 367 residues: MVLSSEASSAADHSAAAPIPTSSWPQLLGRLTEGKHLEPGQAGWAMEQIMSGNARPAQVAAFAVAMKMKVPTAGEVGELADVMLAYARPMPADLIRDDTVDIVGTGGDGVNTVNLSTMASIVVAAAGVPVVKHGNRAASSLAGGADTLEALGVRIDLGPDQVARSLNEIGIGFCFAPQFHPSYRQASVVRREIGVPTVFNLLGPLTNPARPRAGLIGCAFADLAEIMAGVFATRGSSVLVVHGDDGLDELTTTTTSTIWRVQAGTVDKLTFDPGDFGFARAELSQLLGGDPQANAAEARAVLGGAAGPVRDAVVLNAAGAIVAHAGLSSRAEWLPAWQDGLQRAAVAIDSGAAEQLLARWVRFSQHV.

Positions 1 to 17 are enriched in low complexity; sequence MVLSSEASSAADHSAAA. The tract at residues 1 to 22 is disordered; sequence MVLSSEASSAADHSAAAPIPTS. 5-phospho-alpha-D-ribose 1-diphosphate contacts are provided by residues glycine 104, 107 to 108, threonine 112, 114 to 117, 132 to 140, and glycine 144; these read GD, NLST, and KHGNRAASS. Position 104 (glycine 104) interacts with anthranilate. Serine 116 contacts Mg(2+). Asparagine 135 lines the anthranilate pocket. Arginine 190 serves as a coordination point for anthranilate. Residues aspartate 248 and glutamate 249 each contribute to the Mg(2+) site.

Belongs to the anthranilate phosphoribosyltransferase family. As to quaternary structure, homodimer. Requires Mg(2+) as cofactor.

The catalysed reaction is N-(5-phospho-beta-D-ribosyl)anthranilate + diphosphate = 5-phospho-alpha-D-ribose 1-diphosphate + anthranilate. It participates in amino-acid biosynthesis; L-tryptophan biosynthesis; L-tryptophan from chorismate: step 2/5. Its function is as follows. Catalyzes the transfer of the phosphoribosyl group of 5-phosphorylribose-1-pyrophosphate (PRPP) to anthranilate to yield N-(5'-phosphoribosyl)-anthranilate (PRA). The protein is Anthranilate phosphoribosyltransferase of Mycobacterium marinum (strain ATCC BAA-535 / M).